Here is a 131-residue protein sequence, read N- to C-terminus: Holo-[acyl-carrier-protein] synthase (131 aa).

Positions 8 and 58 each coordinate Mg(2+).

The protein belongs to the P-Pant transferase superfamily. AcpS family. Mg(2+) is required as a cofactor.

The protein localises to the cytoplasm. The enzyme catalyses apo-[ACP] + CoA = holo-[ACP] + adenosine 3',5'-bisphosphate + H(+). Functionally, transfers the 4'-phosphopantetheine moiety from coenzyme A to a Ser of acyl-carrier-protein. The polypeptide is Holo-[acyl-carrier-protein] synthase (Oenococcus oeni (strain ATCC BAA-331 / PSU-1)).